The sequence spans 832 residues: Protein PPP4R3C (832 aa).

A disordered region spans residues 708-832 (RTQEGEAVMP…SPKKKPHLSS (125 aa)). Basic and acidic residues-rich tracts occupy residues 725-735 (FTETKRTHQEG) and 749-765 (METKRNQEHEGKVDSPK). Positions 769-779 (SGDFKFSSSYS) are enriched in low complexity. The segment covering 801 to 820 (PDDEEEKEEDEEEKEEDKED) has biased composition (acidic residues).

It belongs to the SMEK family.

The sequence is that of Protein PPP4R3C from Homo sapiens (Human).